The chain runs to 122 residues: uncharacterized protein (122 aa).

2 helical membrane passes run 34–54 (IIFL…GVLV) and 91–111 (FVLA…FVSF).

The protein localises to the cell membrane. This is an uncharacterized protein from Mycoplasma pneumoniae (strain ATCC 29342 / M129 / Subtype 1) (Mycoplasmoides pneumoniae).